Here is a 193-residue protein sequence, read N- to C-terminus: Ribose 1,5-bisphosphate phosphokinase PhnN (193 aa).

9–16 is an ATP binding site; that stretch reads GPSGAGKD.

This sequence belongs to the ribose 1,5-bisphosphokinase family.

The catalysed reaction is alpha-D-ribose 1,5-bisphosphate + ATP = 5-phospho-alpha-D-ribose 1-diphosphate + ADP. The protein operates within metabolic intermediate biosynthesis; 5-phospho-alpha-D-ribose 1-diphosphate biosynthesis; 5-phospho-alpha-D-ribose 1-diphosphate from D-ribose 5-phosphate (route II): step 3/3. Its function is as follows. Catalyzes the phosphorylation of ribose 1,5-bisphosphate to 5-phospho-D-ribosyl alpha-1-diphosphate (PRPP). In Yersinia pestis, this protein is Ribose 1,5-bisphosphate phosphokinase PhnN.